A 247-amino-acid chain; its full sequence is Sugar fermentation stimulation protein homolog (247 aa).

This sequence belongs to the SfsA family.

The chain is Sugar fermentation stimulation protein homolog from Methylorubrum populi (strain ATCC BAA-705 / NCIMB 13946 / BJ001) (Methylobacterium populi).